The primary structure comprises 222 residues: Type II restriction enzyme AbrI (222 aa).

Disordered stretches follow at residues 21-45 (GNREKARQKQQESGKPDQGERRRDR) and 161-222 (NQRR…SPRI). The segment covering 22–42 (NREKARQKQQESGKPDQGERR) has biased composition (basic and acidic residues). The segment covering 188–202 (SSASGSSRSSFTPRP) has biased composition (low complexity).

Belongs to the XhoI type II restriction endonuclease family.

The enzyme catalyses Endonucleolytic cleavage of DNA to give specific double-stranded fragments with terminal 5'-phosphates.. Functionally, a P subtype restriction enzyme that recognizes the double-stranded sequence 5'-CTCGAG-3' and cleaves after C-1. This chain is Type II restriction enzyme AbrI (abrIR), found in Azospirillum brasilense.